The chain runs to 431 residues: Adenylosuccinate synthetase (431 aa).

GTP contacts are provided by residues 12–18 and 40–42; these read GDEGKGK and GHT. D13 functions as the Proton acceptor in the catalytic mechanism. 2 residues coordinate Mg(2+): D13 and G40. Residues 13–16, 38–41, T129, R143, Q224, T239, and R303 contribute to the IMP site; these read DEGK and NAGH. H41 acts as the Proton donor in catalysis. 299–305 lines the substrate pocket; the sequence is VTTGRAR. Residues R305, 331–333, and 413–415 contribute to the GTP site; these read KLD and GVG.

It belongs to the adenylosuccinate synthetase family. As to quaternary structure, homodimer. Requires Mg(2+) as cofactor.

Its subcellular location is the cytoplasm. The enzyme catalyses IMP + L-aspartate + GTP = N(6)-(1,2-dicarboxyethyl)-AMP + GDP + phosphate + 2 H(+). Its pathway is purine metabolism; AMP biosynthesis via de novo pathway; AMP from IMP: step 1/2. In terms of biological role, plays an important role in the de novo pathway of purine nucleotide biosynthesis. Catalyzes the first committed step in the biosynthesis of AMP from IMP. This Mycolicibacterium vanbaalenii (strain DSM 7251 / JCM 13017 / BCRC 16820 / KCTC 9966 / NRRL B-24157 / PYR-1) (Mycobacterium vanbaalenii) protein is Adenylosuccinate synthetase.